The sequence spans 113 residues: UPF0482 protein CKO_01577 (113 aa).

The first 28 residues, 1–28, serve as a signal peptide directing secretion; the sequence is MNNTLSKRLCLTAMLALGAVVYTTSAFA. The segment at 44-67 is disordered; sequence RQHAAMEKEQWNDTRSLRQKVNTR. Residues 47–59 are compositionally biased toward basic and acidic residues; that stretch reads AAMEKEQWNDTRS.

Belongs to the UPF0482 family.

The chain is UPF0482 protein CKO_01577 from Citrobacter koseri (strain ATCC BAA-895 / CDC 4225-83 / SGSC4696).